Here is a 431-residue protein sequence, read N- to C-terminus: MSAKWEKKGANDGELTFEIDLDKISEGLDVAFKRVRKNINTPGFRKGKMPRQIFNKMYGEEALYEDALNAVLPEAYEAAVAEAGIDPVDQPQINVEKMEKGEAWVLTAQVTVKPEVKLGDYKGLEVPKQSRRITIKDVEQELETRRERQAELVLKEDAAAENGDTVVIDYAGSVDGVPFDGGQADNYSLELGSNSFIPGFEDQLVGHKAEEDVDVTVTFPKDYQAEELAGKEAIFKVKIHEVKGKELPELDDEFAKDIDEDVDSLDELKEKIREELKQQKNDAADAAIQDTAVAKATENATIPELPQAMIDEEINSQLQQYLGNMQQQGINPEMYYQITGTTEDDLKKQFAGDADKRVKTSLVLEAVVEAEKIEATDEEVAAELKSLAEQYNMEESAVRSVLSDDMLKHDIGVKKAIEVIADSAVEVKDAK.

One can recognise a PPIase FKBP-type domain in the interval 163–248 (GDTVVIDYAG…IHEVKGKELP (86 aa)).

This sequence belongs to the FKBP-type PPIase family. Tig subfamily.

Its subcellular location is the cytoplasm. The catalysed reaction is [protein]-peptidylproline (omega=180) = [protein]-peptidylproline (omega=0). Functionally, involved in protein export. Acts as a chaperone by maintaining the newly synthesized protein in an open conformation. Functions as a peptidyl-prolyl cis-trans isomerase. The protein is Trigger factor of Latilactobacillus sakei subsp. sakei (strain 23K) (Lactobacillus sakei subsp. sakei).